A 919-amino-acid chain; its full sequence is Tight junction protein ZO-3 (919 aa).

Residues 11–93 (TATLSKDPRR…MANITVKRPR (83 aa)) enclose the PDZ 1 domain. The tract at residues 92 to 173 (PRRIHLPATK…SPGGGSEANG (82 aa)) is disordered. Ser-112 is subject to Phosphoserine. Basic and acidic residues predominate over residues 117 to 131 (GPQRVEEVDQGRGYD). Ser-136 carries the phosphoserine modification. Residues 147-163 (RRPRPGRRGRAGSHGRR) show a composition bias toward basic residues. Phosphoserine occurs at positions 164, 169, 203, and 319. The PDZ 2 domain maps to 195–272 (SVLVKRRDSE…KLSLLVLRDR (78 aa)). Residues 279–377 (IPPAVSDSDS…SSQSMEDRGY (99 aa)) form a disordered region. Thr-325 carries the phosphothreonine modification. Ser-327 bears the Phosphoserine mark. Basic and acidic residues predominate over residues 332–360 (PRLRRESSVDSRTISEPDEQRSELPRESS). The residue at position 371 (Ser-371) is a Phosphoserine. The region spanning 380–446 (DTRVVRFLKG…LTREEAVQFL (67 aa)) is the PDZ 3 domain. In terms of domain architecture, SH3 spans 475–549 (GDSFYIRTHF…PNQSRAEQLA (75 aa)). One can recognise a Guanylate kinase-like domain in the interval 580–761 (LRRGAKKTTQ…WYQELKAIIR (182 aa)). At Ser-591 the chain carries Phosphoserine. Over residues 791–801 (ADSSADLSCDS) the composition is skewed to low complexity. Disordered stretches follow at residues 791–886 (ADSS…DSMR) and 899–919 (RVHDAESSDEDGYDWGPATDL). The span at 812–828 (EGGAYTDGEGYTDGEGG) shows a compositional bias: gly residues. Phosphoserine occurs at positions 856, 905, and 906.

This sequence belongs to the MAGUK family. Interacts with occludin OCLN, claudins and TPJ1. Interacts with PATJ. Interacts with UBN1. Interacts with FASLG. Interacts with CCND1. Post-translationally, phosphorylated.

It is found in the cell membrane. The protein resides in the cell junction. The protein localises to the tight junction. It localises to the nucleus. Its function is as follows. TJP1, TJP2, and TJP3 are closely related scaffolding proteins that link tight junction (TJ) transmembrane proteins such as claudins, junctional adhesion molecules, and occludin to the actin cytoskeleton. The tight junction acts to limit movement of substances through the paracellular space and as a boundary between the compositionally distinct apical and basolateral plasma membrane domains of epithelial and endothelial cells. Binds and recruits PATJ to tight junctions where it connects and stabilizes apical and lateral components of tight junctions. Promotes cell-cycle progression through the sequestration of cyclin D1 (CCND1) at tight junctions during mitosis which prevents CCND1 degradation during M-phase and enables S-phase transition. With TJP1 and TJP2, participates in the junctional retention and stability of the transcription factor DBPA, but is not involved in its shuttling to the nucleus. Contrary to TJP2, TJP3 is dispensable for individual viability, embryonic development, epithelial differentiation, and the establishment of TJs, at least in the laboratory environment. The polypeptide is Tight junction protein ZO-3 (TJP3) (Homo sapiens (Human)).